The following is a 153-amino-acid chain: Endoribonuclease YbeY (153 aa).

Zn(2+)-binding residues include His-114, His-118, and His-124.

The protein belongs to the endoribonuclease YbeY family. Zn(2+) serves as cofactor.

It localises to the cytoplasm. Single strand-specific metallo-endoribonuclease involved in late-stage 70S ribosome quality control and in maturation of the 3' terminus of the 16S rRNA. This Shewanella sp. (strain MR-7) protein is Endoribonuclease YbeY.